Reading from the N-terminus, the 602-residue chain is MLILLKKAVKLKIIRPIDFYFSQFIAQKNNIVMLVAACVSYESSRGYISLPIKYFEKHYFFSSSNEVFIKKILTLLEKKINWPVELLKHASIGNGGTSTPLVLHKKKIYLYKMWKSESNIFNYLYTKNKKNKINQKKCSKILENLFPQKNMSFQKIAVALTLINNITFIIGGPGTGKTTTILKIIIALIKSSKKSIKIQLSAPTGKATTHLNEILKNNIFDLYFSEKEKCSLPSTATTIHQLLGIQKISQKSFFNKSNCLDLDVLIIDEISMVDILMMEKILSSISKNTKLIFIGDHNQLGPIESGSILRKICYYANDGYSFKSMISIEKLTQYKLCKKINKKTTNFISDNICVLNKNYRFNKNSGIYTLSNAIFKKKTRIIESLFDNSIKNIFFYETNSSEQYKKMIKNICLNYEDFWEKIYKKATMKEIIESFQNYQVLCILHDGLFGVNIINKKLEENMYKKNIIKYFYIDGEEWYIGKPIMIINNNRALNVSNGNIGITNINKNGILQVSFLKENNTINNIPVKILRNYKTAWAITVHKSQGSEFMNTALILPNFNSHILNKDTLYTGITRSRKILSIFSDKKIFLNTIFKNTNKILF.

171 to 178 (GGPGTGKT) is a binding site for ATP.

It belongs to the RecD family. In terms of assembly, heterotrimer of RecB, RecC and RecD. All subunits contribute to DNA-binding.

It catalyses the reaction Couples ATP hydrolysis with the unwinding of duplex DNA at the replication fork by translocating in the 5'-3' direction. This creates two antiparallel DNA single strands (ssDNA). The leading ssDNA polymer is the template for DNA polymerase III holoenzyme which synthesizes a continuous strand.. The enzyme catalyses ATP + H2O = ADP + phosphate + H(+). Functionally, a helicase/nuclease that prepares dsDNA breaks (DSB) for recombinational DNA repair. Binds to DSBs and unwinds DNA via a highly rapid and processive ATP-dependent bidirectional helicase activity. Unwinds dsDNA until it encounters a Chi (crossover hotspot instigator) sequence from the 3' direction. Cuts ssDNA a few nucleotides 3' to the Chi site. The properties and activities of the enzyme are changed at Chi. The Chi-altered holoenzyme produces a long 3'-ssDNA overhang and facilitates RecA-binding to the ssDNA for homologous DNA recombination and repair. Holoenzyme degrades any linearized DNA that is unable to undergo homologous recombination. In the holoenzyme this subunit has ssDNA-dependent ATPase and 5'-3' helicase activity. When added to pre-assembled RecBC greatly stimulates nuclease activity and augments holoenzyme processivity. Negatively regulates the RecA-loading ability of RecBCD. The polypeptide is RecBCD enzyme subunit RecD (Buchnera aphidicola subsp. Acyrthosiphon pisum (strain APS) (Acyrthosiphon pisum symbiotic bacterium)).